A 61-amino-acid polypeptide reads, in one-letter code: Transcription elongation factor Spt4 (61 aa).

C6, C9, C18, and C21 together coordinate Zn(2+).

This sequence belongs to the archaeal Spt4 family. In terms of assembly, heterodimer composed of Spt4 and Spt5.

In terms of biological role, stimulates transcription elongation. The sequence is that of Transcription elongation factor Spt4 from Pyrococcus furiosus (strain ATCC 43587 / DSM 3638 / JCM 8422 / Vc1).